Consider the following 319-residue polypeptide: Ubiquinone biosynthesis protein COQ9, mitochondrial (319 aa).

Residues 1–45 (MAATVAFSGVLRRAGWRLLQLRCLPVPRCRPALAPRAFRASAMQL) constitute a mitochondrion transit peptide. Positions 17 to 32 (RLLQLRCLPVPRCRPA) match the SIFI-degron motif. The disordered stretch occupies residues 46 to 99 (RSLDQQKDQPPPSSSQQQSEAQGAEEPNPEALRSPPRYTDQGGEEEEDYESEEQ). Residues 87–98 (GGEEEEDYESEE) are compositionally biased toward acidic residues. K176 is modified (N6-acetyllysine). R245 is a binding site for a 1,2-diacylglycero-3-phosphoethanolamine.

It belongs to the COQ9 family. In terms of assembly, homodimer. Heterodimer; two heterodimers of COQ7:COQ9 come together on the same side of the lipid pseudo-bilayer and form a curved tetramer with a hydrophobic surface suitable for membrane interaction. These two tetramers assemble into a soluble octamer with a pseudo-bilayer of lipids captured within. Interacts with COQ7; this interaction allows ubiquinone (CoQ) isoprene intermediates presentation to COQ7 and facilitates the COQ7-mediated hydroxylase step. In response to mitochondrial stress, the precursor protein is ubiquitinated by the SIFI complex in the cytoplasm before mitochondrial import, leading to its degradation. Within the SIFI complex, UBR4 initiates ubiquitin chain that are further elongated or branched by KCMF1.

The protein resides in the mitochondrion. It functions in the pathway cofactor biosynthesis; ubiquinone biosynthesis. Functionally, membrane-associated protein that warps the membrane surface to access and bind aromatic isoprenes with high specificity, including ubiquinone (CoQ) isoprene intermediates and presents them directly to COQ7, therefore facilitating the COQ7-mediated hydroxylase step. Participates in the biosynthesis of coenzyme Q, also named ubiquinone, an essential lipid-soluble electron transporter for aerobic cellular respiration. The sequence is that of Ubiquinone biosynthesis protein COQ9, mitochondrial from Bos taurus (Bovine).